A 285-amino-acid chain; its full sequence is Probable cobalamin biosynthesis protein CobD (285 aa).

The next 4 membrane-spanning stretches (helical) occupy residues 10–32 (LIDLMFGEPPAIIHPVVGFGKVI), 45–67 (YLDFLVGAISSLVVIGLAFILSH), 145–167 (VIAPLFYYLIFGLPGAVVYRAVN), and 266–283 (VYWIIVVEFLLIVAIILY).

It belongs to the CobD/CbiB family.

The protein localises to the cell membrane. It functions in the pathway cofactor biosynthesis; adenosylcobalamin biosynthesis. Converts cobyric acid to cobinamide by the addition of aminopropanol on the F carboxylic group. The protein is Probable cobalamin biosynthesis protein CobD of Pyrococcus furiosus (strain ATCC 43587 / DSM 3638 / JCM 8422 / Vc1).